The following is a 116-amino-acid chain: Large ribosomal subunit protein bL19 (116 aa).

Belongs to the bacterial ribosomal protein bL19 family.

Functionally, this protein is located at the 30S-50S ribosomal subunit interface and may play a role in the structure and function of the aminoacyl-tRNA binding site. In Pseudomonas putida (strain W619), this protein is Large ribosomal subunit protein bL19.